Consider the following 457-residue polypeptide: tRNA modification GTPase MnmE (457 aa).

Residues Arg-25, Glu-87, and Arg-126 each coordinate (6S)-5-formyl-5,6,7,8-tetrahydrofolate. In terms of domain architecture, TrmE-type G spans 223 to 377 (GIATAIIGRP…IEEKINQLFF (155 aa)). Position 233 (Asn-233) interacts with K(+). Residues 233–238 (NVGKSS), 252–258 (TDIAGTT), and 277–280 (DTAG) each bind GTP. Residue Ser-237 coordinates Mg(2+). K(+)-binding residues include Thr-252, Ile-254, and Thr-257. Thr-258 lines the Mg(2+) pocket. Residue Lys-457 coordinates (6S)-5-formyl-5,6,7,8-tetrahydrofolate.

The protein belongs to the TRAFAC class TrmE-Era-EngA-EngB-Septin-like GTPase superfamily. TrmE GTPase family. Homodimer. Heterotetramer of two MnmE and two MnmG subunits. It depends on K(+) as a cofactor.

The protein localises to the cytoplasm. Its function is as follows. Exhibits a very high intrinsic GTPase hydrolysis rate. Involved in the addition of a carboxymethylaminomethyl (cmnm) group at the wobble position (U34) of certain tRNAs, forming tRNA-cmnm(5)s(2)U34. The polypeptide is tRNA modification GTPase MnmE (Streptococcus suis (strain 98HAH33)).